A 252-amino-acid polypeptide reads, in one-letter code: Small ribosomal subunit protein uS3 (252 aa).

In terms of domain architecture, KH type-2 spans 39-111; it reads IRKLINNFAK…EVNLNVLEVK (73 aa). The interval 222-252 is disordered; it reads KPFASQSSNTPNRRPRNFKGGNNNHVNAKKN. The segment covering 241–252 has biased composition (polar residues); sequence GGNNNHVNAKKN.

This sequence belongs to the universal ribosomal protein uS3 family. As to quaternary structure, part of the 30S ribosomal subunit. Forms a tight complex with proteins S10 and S14.

Functionally, binds the lower part of the 30S subunit head. Binds mRNA in the 70S ribosome, positioning it for translation. This chain is Small ribosomal subunit protein uS3, found in Phytoplasma sp. (strain STRAWB2).